A 173-amino-acid chain; its full sequence is RNA pyrophosphohydrolase (173 aa).

Residues 6-149 (GYRPNVGIIL…KRHVYRRALR (144 aa)) enclose the Nudix hydrolase domain. Residues 38-59 (GGIRRDESPLDAMYRELAEETG) carry the Nudix box motif.

It belongs to the Nudix hydrolase family. RppH subfamily. Requires a divalent metal cation as cofactor.

Functionally, accelerates the degradation of transcripts by removing pyrophosphate from the 5'-end of triphosphorylated RNA, leading to a more labile monophosphorylated state that can stimulate subsequent ribonuclease cleavage. The protein is RNA pyrophosphohydrolase of Thioalkalivibrio sulfidiphilus (strain HL-EbGR7).